The sequence spans 352 residues: S-norcoclaurine synthase 1 (352 aa).

The 105-residue stretch at 200-304 folds into the Fe2OG dioxygenase domain; the sequence is KPLRTVFNRE…RLSIAAFHDP (105 aa). Fe cation-binding residues include His-228, Asp-230, and His-285.

The protein belongs to the iron/ascorbate-dependent oxidoreductase family. In terms of assembly, monomer. It depends on Fe cation as a cofactor.

It catalyses the reaction (4-hydroxyphenyl)acetaldehyde + dopamine = (S)-norcoclaurine + H2O. Its activity is regulated as follows. Inhibited by O-phenanthroline, but not by EDTA. Functionally, involved in the biosynthesis of the common precursor of all benzylisoquinoline alkaloids such as morphine, sanguinarine, codeine or berberine. Condenses dopamine and phenylacetaldehyde, 3,4-dihydrophenylacetaldehyde or 4-hydroxyphenylacetaldehyde. In Coptis japonica (Japanese goldthread), this protein is S-norcoclaurine synthase 1 (NCS1).